Reading from the N-terminus, the 496-residue chain is 7,8-epoxymelianol synthase CYP88A154 (496 aa).

Residues 11 to 31 form a helical membrane-spanning segment; it reads FNFLWLILAIFVGTYVVLFGF. Cys-444 contributes to the heme binding site.

It belongs to the cytochrome P450 family. Requires heme as cofactor.

It localises to the membrane. It carries out the reaction melianol + reduced [NADPH--hemoprotein reductase] + O2 = 7,8-epoxymelianol + oxidized [NADPH--hemoprotein reductase] + H2O + H(+). It functions in the pathway secondary metabolite biosynthesis; terpenoid biosynthesis. In terms of biological role, monooxygenase involved in the biosynthesis of glabretanes, limonoids and quassinoids triterpene natural products such as ailanthone, chaparrinone, glaucarubinone and amarolide, allelopathic degraded triterpene lactones inhibiting the growth of other plants, and possessing antimalarial, antifeedant, insecticidal, anti-inflammatory and anticancer activities. Catalyzes the epoxidation of melianol to produce 7,8-epoxymelianol. The sequence is that of 7,8-epoxymelianol synthase CYP88A154 from Ailanthus altissima (Tree-of-heaven).